A 101-amino-acid polypeptide reads, in one-letter code: MSCCNPCVPCQPCGPTPLANSCNEPCVRQCQNSTVVIEPSPVVVTLPGPILSSFPQNTVVGSSTSAAVGSILSCEGVPINSGGFDLSCITSRYCGNRCRPC.

An N-acetylserine modification is found at Ser-2.

This sequence belongs to the avian keratin family. As to quaternary structure, the avian keratins (F-ker, S-ker, C-ker and B-ker) are a complex mixture of very similar polypeptides.

The chain is Feather keratin Cos1-1/Cos1-3/Cos2-1 from Columba livia (Rock dove).